The primary structure comprises 436 residues: Cysteine--tRNA ligase (436 aa).

Cysteine 24 contacts Zn(2+). The 'HIGH' region signature appears at 26-36; it reads PTVYNHIHIGN. Zn(2+)-binding residues include cysteine 202, histidine 227, and glutamate 231. A 'KMSKS' region motif is present at residues 259–263; that stretch reads KMSKS. Lysine 262 provides a ligand contact to ATP.

The protein belongs to the class-I aminoacyl-tRNA synthetase family. Monomer. Zn(2+) serves as cofactor.

The protein localises to the cytoplasm. It carries out the reaction tRNA(Cys) + L-cysteine + ATP = L-cysteinyl-tRNA(Cys) + AMP + diphosphate. This Ureaplasma parvum serovar 3 (strain ATCC 700970) protein is Cysteine--tRNA ligase.